The chain runs to 175 residues: Peptide deformylase (175 aa).

Fe cation-binding residues include cysteine 99 and histidine 141. Residue glutamate 142 is part of the active site. Histidine 145 provides a ligand contact to Fe cation.

Belongs to the polypeptide deformylase family. It depends on Fe(2+) as a cofactor.

It catalyses the reaction N-terminal N-formyl-L-methionyl-[peptide] + H2O = N-terminal L-methionyl-[peptide] + formate. Functionally, removes the formyl group from the N-terminal Met of newly synthesized proteins. Requires at least a dipeptide for an efficient rate of reaction. N-terminal L-methionine is a prerequisite for activity but the enzyme has broad specificity at other positions. The protein is Peptide deformylase of Rickettsia typhi (strain ATCC VR-144 / Wilmington).